The following is a 662-amino-acid chain: UvrABC system protein B (662 aa).

The Helicase ATP-binding domain maps to 25 to 412; sequence EGVRRGYRYQ…SEQVVEQLIR (388 aa). 38 to 45 provides a ligand contact to ATP; sequence GVTGSGKT. The Beta-hairpin signature appears at 91–114; it reads YYDYYQPEAYVPETDTYIEKDASI. In terms of domain architecture, Helicase C-terminal spans 429–595; sequence QVDDLIAEIR…TVVKGVRDVI (167 aa). Residues 620-655 form the UVR domain; the sequence is KSTIEQLEKEMRQAAIELQFEKAAKLRDMILELRKQ.

This sequence belongs to the UvrB family. As to quaternary structure, forms a heterotetramer with UvrA during the search for lesions. Interacts with UvrC in an incision complex.

It is found in the cytoplasm. In terms of biological role, the UvrABC repair system catalyzes the recognition and processing of DNA lesions. A damage recognition complex composed of 2 UvrA and 2 UvrB subunits scans DNA for abnormalities. Upon binding of the UvrA(2)B(2) complex to a putative damaged site, the DNA wraps around one UvrB monomer. DNA wrap is dependent on ATP binding by UvrB and probably causes local melting of the DNA helix, facilitating insertion of UvrB beta-hairpin between the DNA strands. Then UvrB probes one DNA strand for the presence of a lesion. If a lesion is found the UvrA subunits dissociate and the UvrB-DNA preincision complex is formed. This complex is subsequently bound by UvrC and the second UvrB is released. If no lesion is found, the DNA wraps around the other UvrB subunit that will check the other stand for damage. The chain is UvrABC system protein B from Caldanaerobacter subterraneus subsp. tengcongensis (strain DSM 15242 / JCM 11007 / NBRC 100824 / MB4) (Thermoanaerobacter tengcongensis).